A 539-amino-acid polypeptide reads, in one-letter code: uncharacterized protein (539 aa).

2 ABC transporter domains span residues 9–276 (LEVK…EFKK) and 288–536 (IKLE…QEMF). ATP is bound by residues 41-48 (GKSGAGKS) and 325-332 (GTSGAGKT).

It belongs to the ABC transporter superfamily.

This is an uncharacterized protein from Methanocaldococcus jannaschii (strain ATCC 43067 / DSM 2661 / JAL-1 / JCM 10045 / NBRC 100440) (Methanococcus jannaschii).